We begin with the raw amino-acid sequence, 234 residues long: 2-C-methyl-D-erythritol 4-phosphate cytidylyltransferase (234 aa).

It belongs to the IspD/TarI cytidylyltransferase family. IspD subfamily.

The enzyme catalyses 2-C-methyl-D-erythritol 4-phosphate + CTP + H(+) = 4-CDP-2-C-methyl-D-erythritol + diphosphate. Its pathway is isoprenoid biosynthesis; isopentenyl diphosphate biosynthesis via DXP pathway; isopentenyl diphosphate from 1-deoxy-D-xylulose 5-phosphate: step 2/6. Catalyzes the formation of 4-diphosphocytidyl-2-C-methyl-D-erythritol from CTP and 2-C-methyl-D-erythritol 4-phosphate (MEP). In Desulforamulus reducens (strain ATCC BAA-1160 / DSM 100696 / MI-1) (Desulfotomaculum reducens), this protein is 2-C-methyl-D-erythritol 4-phosphate cytidylyltransferase.